Here is a 298-residue protein sequence, read N- to C-terminus: 4-hydroxy-tetrahydrodipicolinate synthase (298 aa).

A pyruvate-binding site is contributed by Thr48. The Proton donor/acceptor role is filled by Tyr137. The active-site Schiff-base intermediate with substrate is Lys166. Ile207 is a pyruvate binding site.

It belongs to the DapA family. As to quaternary structure, homotetramer; dimer of dimers.

The protein resides in the cytoplasm. It carries out the reaction L-aspartate 4-semialdehyde + pyruvate = (2S,4S)-4-hydroxy-2,3,4,5-tetrahydrodipicolinate + H2O + H(+). It functions in the pathway amino-acid biosynthesis; L-lysine biosynthesis via DAP pathway; (S)-tetrahydrodipicolinate from L-aspartate: step 3/4. In terms of biological role, catalyzes the condensation of (S)-aspartate-beta-semialdehyde [(S)-ASA] and pyruvate to 4-hydroxy-tetrahydrodipicolinate (HTPA). This chain is 4-hydroxy-tetrahydrodipicolinate synthase, found in Campylobacter jejuni subsp. jejuni serotype O:23/36 (strain 81-176).